A 391-amino-acid chain; its full sequence is O-methyltransferase ATR12 (391 aa).

S-adenosyl-L-methionine is bound by residues 233–234 (GG), D259, and 279–280 (DF). The Proton acceptor role is filled by H299.

It belongs to the class I-like SAM-binding methyltransferase superfamily. Cation-independent O-methyltransferase family. COMT subfamily.

It participates in mycotoxin biosynthesis. O-methyltransferase; part of the core atranone cluster (CAC) which products are predicted to catalyze most or all steps of mycotoxin atranone synthesis, starting from geranylgeranyl pyrophosphate (GGPP). The initial cyclization of GGPP to dolabellane is probably performed by the terpene cyclase ATR13. The Baeyer-Villiger oxidation near the end of the atranone synthesis, which converts atranones D and E to atranones F and G is predicted to be catalyzed by the monooxygenase ATR8. Of the CAC's other predicted gene products, the reducing PKS ATR6 might synthesize a polyketide chain. This polyketide is probably transferred onto the atranone backbone by the polyketide transferase ATR5. Other predicted CAC products include 4 oxygenases (ATR2, ATR3, ATR4, and ATR14), 3 short-chain reductases (ATR7, ATR9, and ATR10), and a methyltransferase (ATR12). These may all be involved in the various steps of atranone biosynthesis, although their specific roles must await experimental determination. This Stachybotrys chlorohalonatus (strain IBT 40285) protein is O-methyltransferase ATR12.